Here is a 120-residue protein sequence, read N- to C-terminus: Flagellar protein FliT (120 aa).

The interval methionine 1 to isoleucine 50 is required for homodimerization. Positions leucine 60–arginine 98 are fliD binding.

The protein belongs to the FliT family. Homodimer. Interacts with FliD and FlhC.

It localises to the cytoplasm. The protein resides in the cytosol. In terms of biological role, dual-function protein that regulates the transcription of class 2 flagellar operons and that also acts as an export chaperone for the filament-capping protein FliD. As a transcriptional regulator, acts as an anti-FlhDC factor; it directly binds FlhC, thus inhibiting the binding of the FlhC/FlhD complex to class 2 promoters, resulting in decreased expression of class 2 flagellar operons. As a chaperone, effects FliD transition to the membrane by preventing its premature polymerization, and by directing it to the export apparatus. This is Flagellar protein FliT from Yersinia pestis bv. Antiqua (strain Antiqua).